A 331-amino-acid polypeptide reads, in one-letter code: 4-hydroxythreonine-4-phosphate dehydrogenase (331 aa).

Residues H137 and T138 each contribute to the substrate site. Residues H167, H212, and H267 each contribute to the a divalent metal cation site. K275, N284, and R293 together coordinate substrate.

Belongs to the PdxA family. In terms of assembly, homodimer. The cofactor is Zn(2+). Mg(2+) is required as a cofactor. It depends on Co(2+) as a cofactor.

The protein localises to the cytoplasm. It catalyses the reaction 4-(phosphooxy)-L-threonine + NAD(+) = 3-amino-2-oxopropyl phosphate + CO2 + NADH. It participates in cofactor biosynthesis; pyridoxine 5'-phosphate biosynthesis; pyridoxine 5'-phosphate from D-erythrose 4-phosphate: step 4/5. In terms of biological role, catalyzes the NAD(P)-dependent oxidation of 4-(phosphooxy)-L-threonine (HTP) into 2-amino-3-oxo-4-(phosphooxy)butyric acid which spontaneously decarboxylates to form 3-amino-2-oxopropyl phosphate (AHAP). This Yersinia pseudotuberculosis serotype I (strain IP32953) protein is 4-hydroxythreonine-4-phosphate dehydrogenase.